Here is a 141-residue protein sequence, read N- to C-terminus: MNRTMFKSKIHRATVTHADLHYVGSVTVDLDLLEAADILPGELVSIVDITNGARLETYTIAGERGSGVIGINGAAAHLMHENDLVILITYAQMTTEEAKAYEPKVVHVDQDNRIIQLGNDPAEGIAPGMTRPPFALNNAAL.

Serine 25 acts as the Schiff-base intermediate with substrate; via pyruvic acid in catalysis. Serine 25 is modified (pyruvic acid (Ser)). Residue threonine 57 participates in substrate binding. Tyrosine 58 (proton donor) is an active-site residue. 73-75 (GAA) is a binding site for substrate.

This sequence belongs to the PanD family. In terms of assembly, heterooctamer of four alpha and four beta subunits. Pyruvate is required as a cofactor. Post-translationally, is synthesized initially as an inactive proenzyme, which is activated by self-cleavage at a specific serine bond to produce a beta-subunit with a hydroxyl group at its C-terminus and an alpha-subunit with a pyruvoyl group at its N-terminus.

The protein localises to the cytoplasm. It carries out the reaction L-aspartate + H(+) = beta-alanine + CO2. Its pathway is cofactor biosynthesis; (R)-pantothenate biosynthesis; beta-alanine from L-aspartate: step 1/1. In terms of biological role, catalyzes the pyruvoyl-dependent decarboxylation of aspartate to produce beta-alanine. The sequence is that of Aspartate 1-decarboxylase from Pseudarthrobacter chlorophenolicus (strain ATCC 700700 / DSM 12829 / CIP 107037 / JCM 12360 / KCTC 9906 / NCIMB 13794 / A6) (Arthrobacter chlorophenolicus).